We begin with the raw amino-acid sequence, 841 residues long: Beta-adaptin-like protein A (841 aa).

Disordered regions lie at residues 1–25 (MAPP…VSDL) and 650–671 (DENK…LESS). Polar residues-rich tracts occupy residues 9–25 (RYPS…VSDL) and 654–671 (GVSN…LESS).

Belongs to the adaptor complexes large subunit family. In terms of assembly, adaptor protein complexes are heterotetramers composed of two large adaptins (beta-type subunit and alpha-type or delta-type or epsilon-type or gamma-type subunit), a medium adaptin (mu-type subunit) and a small adaptin (sigma-type subunit). Interacts with AHK2.

It localises to the golgi apparatus. It is found in the trans-Golgi network. Its subcellular location is the cytoplasmic vesicle. The protein resides in the clathrin-coated vesicle membrane. Subunit of clathrin-associated adaptor protein complex that plays a role in protein sorting in the late-Golgi/trans-Golgi network (TGN) and/or endosomes. The AP complexes mediate both the recruitment of clathrin to membranes and the recognition of sorting signals within the cytosolic tails of transmembrane cargo molecules. The sequence is that of Beta-adaptin-like protein A (BETAA-AD) from Arabidopsis thaliana (Mouse-ear cress).